The following is a 114-amino-acid chain: MTQGQGFGFGLGKMKELAAAIQKAQQVQEGAKKLQEDLEKMEIEGVAAGGLVKVIMSGNQEPRRVEISPDLMSEGAEVVADLVTAAMKDAYLKSTTTMRERMEELTGGLSLPGM.

This sequence belongs to the YbaB/EbfC family. Homodimer.

The protein localises to the cytoplasm. Its subcellular location is the nucleoid. Binds to DNA and alters its conformation. May be involved in regulation of gene expression, nucleoid organization and DNA protection. In Cyanothece sp. (strain PCC 7425 / ATCC 29141), this protein is Nucleoid-associated protein Cyan7425_0899.